The sequence spans 425 residues: Serine--tRNA ligase (425 aa).

231–233 is an L-serine binding site; the sequence is TAE. 262-264 serves as a coordination point for ATP; sequence RSE. An L-serine-binding site is contributed by Glu-285. 349-352 is an ATP binding site; that stretch reads EISS. Ser-385 contributes to the L-serine binding site.

The protein belongs to the class-II aminoacyl-tRNA synthetase family. Type-1 seryl-tRNA synthetase subfamily. In terms of assembly, homodimer. The tRNA molecule binds across the dimer.

The protein resides in the cytoplasm. It carries out the reaction tRNA(Ser) + L-serine + ATP = L-seryl-tRNA(Ser) + AMP + diphosphate + H(+). The enzyme catalyses tRNA(Sec) + L-serine + ATP = L-seryl-tRNA(Sec) + AMP + diphosphate + H(+). It functions in the pathway aminoacyl-tRNA biosynthesis; selenocysteinyl-tRNA(Sec) biosynthesis; L-seryl-tRNA(Sec) from L-serine and tRNA(Sec): step 1/1. Its function is as follows. Catalyzes the attachment of serine to tRNA(Ser). Is also able to aminoacylate tRNA(Sec) with serine, to form the misacylated tRNA L-seryl-tRNA(Sec), which will be further converted into selenocysteinyl-tRNA(Sec). The polypeptide is Serine--tRNA ligase (Maricaulis maris (strain MCS10) (Caulobacter maris)).